Consider the following 193-residue polypeptide: Peptidyl-tRNA hydrolase (193 aa).

Tyrosine 14 lines the tRNA pocket. Histidine 19 (proton acceptor) is an active-site residue. The tRNA site is built by phenylalanine 64, asparagine 66, and asparagine 112.

It belongs to the PTH family. As to quaternary structure, monomer.

It localises to the cytoplasm. It carries out the reaction an N-acyl-L-alpha-aminoacyl-tRNA + H2O = an N-acyl-L-amino acid + a tRNA + H(+). Functionally, hydrolyzes ribosome-free peptidyl-tRNAs (with 1 or more amino acids incorporated), which drop off the ribosome during protein synthesis, or as a result of ribosome stalling. In terms of biological role, catalyzes the release of premature peptidyl moieties from peptidyl-tRNA molecules trapped in stalled 50S ribosomal subunits, and thus maintains levels of free tRNAs and 50S ribosomes. The polypeptide is Peptidyl-tRNA hydrolase (Bartonella quintana (strain Toulouse) (Rochalimaea quintana)).